We begin with the raw amino-acid sequence, 220 residues long: Pro-Pro endopeptidase (220 aa).

The N-terminal stretch at 1-26 is a signal peptide; sequence MRPSKKLLIAIISIFLISSVPVSAHA. Residues 35-220 enclose the ATLF-like domain; sequence KDTLSQIVVF…TYSFLQNLAK (186 aa). 2 interacts with substrate peptide regions span residues 101 to 103 and 117 to 119; these read KGW and GGS. H142 provides a ligand contact to Zn(2+). The active-site Proton acceptor is E143. Zn(2+) contacts are provided by H146, Y178, and E185.

This sequence belongs to the peptidase M34 family. Pro-Pro endopeptidase subfamily. In terms of assembly, monomer. The cofactor is Zn(2+).

Its subcellular location is the secreted. The catalysed reaction is The enzyme catalyzes the hydrolytic cleavage of peptide bonds between two proline residues.. Is inhibited by the chelating agent o-phenanthroline in vitro. Its function is as follows. Zinc-dependent endoprotease with a unique preference for proline residues surrounding the scissile bond. Exhibits a high preference for an asparagine at the P2 position and hydrophobic residues (Val, Ile, Leu) at the P3 position. Efficiently cleaves the LPXTG cell surface proteins CD630_28310 and CD630_32460 at multiple cleavage sites in vivo. Has a role in the regulation of C.difficile adhesion versus motility by cleaving surface adhesion proteins such as the collagen binding protein CD630_28310, and is important for efficient infection. Is also able to cleave fibronectin and fibrinogen in vitro; cleaves at the N-terminus of the beta-chain of fibrinogen. Destabilizes the fibronectin network produced by human fibroblasts. Therefore, may be important in key steps of clostridial pathogenesis by degrading extracellular matrix components associated with the gut epithelial cells. To a lesser extent, IgA1, IgA2, and human HSP 90-beta, but not HSP 90-alpha, are also substrates for the enzyme. Is not active on different collagen types, casein and gelatin. This is Pro-Pro endopeptidase from Clostridioides difficile (strain 630) (Peptoclostridium difficile).